Consider the following 388-residue polypeptide: Single-stranded DNA-binding protein 3 (388 aa).

At Met1 the chain carries N-acetylmethionine. Positions 16–48 constitute a LisH domain; it reads AREKLALYVYEYLLHVGAQKSAQTFLSEIRWEK. The tract at residues 101–388 is disordered; it reads VLGNIPPNDG…NYSPSMTMSV (288 aa). Residues 126–139 are compositionally biased toward pro residues; the sequence is GSQPSPHAQPPPHN. Asymmetric dimethylarginine is present on residues Arg155, Arg161, and Arg165. Composition is skewed to low complexity over residues 200–209 and 250–268; these read MQRMNPPRGM and PNSANSIPYSSSSPGTYVG. Positions 272–282 are enriched in pro residues; sequence GGGPPGTPIMP. Over residues 285 to 296 the composition is skewed to polar residues; it reads ADSTNSSDNIYT. The segment covering 315 to 325 has biased composition (gly residues); that stretch reads GSDGPMGGMGG. Over residues 346–357 the composition is skewed to low complexity; it reads NSPNNISGISNP. Residues Ser347, Ser352, and Ser355 each carry the phosphoserine modification. Residue Thr360 is modified to Phosphothreonine. Residues 373 to 388 are compositionally biased toward polar residues; sequence HSFQNDNYSPSMTMSV. Residues Ser381 and Ser387 each carry the phosphoserine modification.

Highly expressed in all hematopoietic tissues, including spleen, lymph node, peripheral blood, bone marrow, thymus, and fetal liver, with highest expression in thymus and fetal liver. Expression is also high in heart, brain, kidney, and skeletal muscle.

It is found in the nucleus. May be involved in transcription regulation of the alpha 2(I) collagen gene where it binds to the single-stranded polypyrimidine sequences in the promoter region. The protein is Single-stranded DNA-binding protein 3 (SSBP3) of Homo sapiens (Human).